The chain runs to 347 residues: Dihydroorotase (347 aa).

Residues His-14 and His-16 each coordinate Zn(2+). Substrate contacts are provided by residues 16 to 18 (HLR) and Asn-42. Zn(2+) is bound by residues Lys-100, His-137, and His-175. An N6-carboxylysine modification is found at Lys-100. His-137 lines the substrate pocket. Leu-220 is a binding site for substrate. Position 248 (Asp-248) interacts with Zn(2+). Residue Asp-248 is part of the active site. His-252 and Ala-264 together coordinate substrate.

Belongs to the metallo-dependent hydrolases superfamily. DHOase family. Class II DHOase subfamily. In terms of assembly, homodimer. It depends on Zn(2+) as a cofactor.

It carries out the reaction (S)-dihydroorotate + H2O = N-carbamoyl-L-aspartate + H(+). Its pathway is pyrimidine metabolism; UMP biosynthesis via de novo pathway; (S)-dihydroorotate from bicarbonate: step 3/3. Functionally, catalyzes the reversible cyclization of carbamoyl aspartate to dihydroorotate. The chain is Dihydroorotase from Pseudomonas syringae pv. tomato (strain ATCC BAA-871 / DC3000).